The following is a 120-amino-acid chain: Large ribosomal subunit protein eL18 (120 aa).

The protein belongs to the eukaryotic ribosomal protein eL18 family.

The protein is Large ribosomal subunit protein eL18 of Methanococcus maripaludis (strain DSM 14266 / JCM 13030 / NBRC 101832 / S2 / LL).